The primary structure comprises 447 residues: Tyrosine aminotransferase (447 aa).

Position 273 is an N6-(pyridoxal phosphate)lysine (lysine 273). Serine 441 bears the Phosphoserine mark.

The protein belongs to the class-I pyridoxal-phosphate-dependent aminotransferase family. In terms of assembly, homodimer. It depends on pyridoxal 5'-phosphate as a cofactor.

The enzyme catalyses L-tyrosine + 2-oxoglutarate = 3-(4-hydroxyphenyl)pyruvate + L-glutamate. It functions in the pathway amino-acid degradation; L-phenylalanine degradation; acetoacetate and fumarate from L-phenylalanine: step 2/6. Its function is as follows. Transaminase involved in tyrosine breakdown. Converts tyrosine to p-hydroxyphenylpyruvate. Can catalyze the reverse reaction, using glutamic acid, with 2-oxoglutarate as cosubstrate (in vitro). Has much lower affinity and transaminase activity for phenylalanine. The protein is Tyrosine aminotransferase (TAT) of Bos taurus (Bovine).